Consider the following 241-residue polypeptide: Pyridoxine 5'-phosphate synthase (241 aa).

Position 7 (N7) interacts with 3-amino-2-oxopropyl phosphate. A 1-deoxy-D-xylulose 5-phosphate-binding site is contributed by D9–H10. A 3-amino-2-oxopropyl phosphate-binding site is contributed by R18. Catalysis depends on H43, which acts as the Proton acceptor. Residues R45 and H50 each coordinate 1-deoxy-D-xylulose 5-phosphate. E70 acts as the Proton acceptor in catalysis. Residue T100 participates in 1-deoxy-D-xylulose 5-phosphate binding. H190 (proton donor) is an active-site residue. Residues G191 and G212–H213 each bind 3-amino-2-oxopropyl phosphate.

It belongs to the PNP synthase family. Homooctamer; tetramer of dimers.

It is found in the cytoplasm. The enzyme catalyses 3-amino-2-oxopropyl phosphate + 1-deoxy-D-xylulose 5-phosphate = pyridoxine 5'-phosphate + phosphate + 2 H2O + H(+). The protein operates within cofactor biosynthesis; pyridoxine 5'-phosphate biosynthesis; pyridoxine 5'-phosphate from D-erythrose 4-phosphate: step 5/5. Functionally, catalyzes the complicated ring closure reaction between the two acyclic compounds 1-deoxy-D-xylulose-5-phosphate (DXP) and 3-amino-2-oxopropyl phosphate (1-amino-acetone-3-phosphate or AAP) to form pyridoxine 5'-phosphate (PNP) and inorganic phosphate. The chain is Pyridoxine 5'-phosphate synthase from Bordetella avium (strain 197N).